The sequence spans 198 residues: Ribonuclease HII (198 aa).

The RNase H type-2 domain maps to 14–198 (HMIVGVDEAG…FAPVAQLQLV (185 aa)). The a divalent metal cation site is built by Asp20, Glu21, and Asp110.

This sequence belongs to the RNase HII family. Requires Mn(2+) as cofactor. The cofactor is Mg(2+).

The protein localises to the cytoplasm. It catalyses the reaction Endonucleolytic cleavage to 5'-phosphomonoester.. Endonuclease that specifically degrades the RNA of RNA-DNA hybrids. In Sphingopyxis alaskensis (strain DSM 13593 / LMG 18877 / RB2256) (Sphingomonas alaskensis), this protein is Ribonuclease HII.